The sequence spans 270 residues: MIQFNEDIRSLSFAEIKEEIHKLSIVDLYRNDEHTKLINWLEEDKRKNVLSLKEKIEKDLESYLNEVKRVKTMYEFDKSFGSYRYIAGVDEVGRGPLAGPIVACSVILDLNVLEKDLILYINDSKKVKEHKREELSEIIKEKALSYQIAVSSNKEIDEKGIAFANNKVFLESCNSLSIKPDLVLSDGYLIKNIGIENKSVIKGDTKSASIAAASIVAKVYRDRLMKEYAKKYPHYDFENNVGYGTSKHIEGLKKYGKSDIHRNSFLTKLL.

Residues 84–270 (RYIAGVDEVG…HRNSFLTKLL (187 aa)) enclose the RNase H type-2 domain. A divalent metal cation is bound by residues Asp90, Glu91, and Asp186.

This sequence belongs to the RNase HII family. It depends on Mn(2+) as a cofactor. The cofactor is Mg(2+).

The protein resides in the cytoplasm. It catalyses the reaction Endonucleolytic cleavage to 5'-phosphomonoester.. In terms of biological role, endonuclease that specifically degrades the RNA of RNA-DNA hybrids. The protein is Ribonuclease HII of Clostridium beijerinckii (strain ATCC 51743 / NCIMB 8052) (Clostridium acetobutylicum).